We begin with the raw amino-acid sequence, 408 residues long: Aspartate aminotransferase (408 aa).

Positions 45, 134, and 184 each coordinate L-aspartate. At Lys-247 the chain carries N6-(pyridoxal phosphate)lysine. Position 382 (Arg-382) interacts with L-aspartate.

It belongs to the class-I pyridoxal-phosphate-dependent aminotransferase family. Homodimer. The cofactor is pyridoxal 5'-phosphate.

The protein resides in the cytoplasm. It catalyses the reaction L-aspartate + 2-oxoglutarate = oxaloacetate + L-glutamate. Functionally, catalyzes the reversible conversion of aspartate and 2-oxoglutarate to glutamate and oxaloacetate. Does not have prephenate aminotransferase activity. The polypeptide is Aspartate aminotransferase (Streptomyces avermitilis (strain ATCC 31267 / DSM 46492 / JCM 5070 / NBRC 14893 / NCIMB 12804 / NRRL 8165 / MA-4680)).